Consider the following 145-residue polypeptide: Internal scaffolding protein VP3 (145 aa).

Belongs to the microviridae B protein family.

It localises to the host cytoplasm. Participates in the assembly of the viral procapsid in the cytoplasm. Released from the procapsid upon genome packaging, possibly through affinity displacement by the protein ORF8, or by proteolysis. The polypeptide is Internal scaffolding protein VP3 (Chlamydia phage 1 (Bacteriophage Chp1)).